We begin with the raw amino-acid sequence, 448 residues long: tRNA modification GTPase MnmE (448 aa).

Arg-22, Glu-79, and Lys-118 together coordinate (6S)-5-formyl-5,6,7,8-tetrahydrofolate. The 158-residue stretch at 214 to 371 folds into the TrmE-type G domain; that stretch reads GLHVVLAGQP…LRQELLRIAG (158 aa). Asn-224 is a K(+) binding site. Residues 224 to 229, 243 to 249, and 268 to 271 each bind GTP; these read NVGKSS, TPIAGTT, and DTAG. Ser-228 lines the Mg(2+) pocket. K(+) contacts are provided by Thr-243, Ile-245, and Thr-248. Thr-249 contacts Mg(2+). A (6S)-5-formyl-5,6,7,8-tetrahydrofolate-binding site is contributed by Lys-448.

This sequence belongs to the TRAFAC class TrmE-Era-EngA-EngB-Septin-like GTPase superfamily. TrmE GTPase family. As to quaternary structure, homodimer. Heterotetramer of two MnmE and two MnmG subunits. The cofactor is K(+).

The protein resides in the cytoplasm. Functionally, exhibits a very high intrinsic GTPase hydrolysis rate. Involved in the addition of a carboxymethylaminomethyl (cmnm) group at the wobble position (U34) of certain tRNAs, forming tRNA-cmnm(5)s(2)U34. This is tRNA modification GTPase MnmE from Dechloromonas aromatica (strain RCB).